The primary structure comprises 94 residues: Large ribosomal subunit protein bL27 (94 aa).

The propeptide occupies 1–9; it reads MLRLDLQFF.

The protein belongs to the bacterial ribosomal protein bL27 family. In terms of processing, the N-terminus is cleaved by ribosomal processing cysteine protease Prp.

In Bacillus pumilus (strain SAFR-032), this protein is Large ribosomal subunit protein bL27.